We begin with the raw amino-acid sequence, 503 residues long: MLLEVLNPRHYNVTSMVSEVVPIASIAILLLTGFLLLVWNYEDTSSIPGPSYFLGIGPLISHCRFLWMGIGSACNYYNKMYGEFMRVWVCGEETLIISKSSSMFHVMKHSHYISRFGSKLGLQFIGMHEKGIIFNNNPALWKAVRPFFTKALSGPGLVRMVTICADSITKHLDRLEEVCNDLGYVDVLTLMRRIMLDTSNMLFLGIPLDESAIVVKIQGYFDAWQALLLKPDIFFKISWLCRKYEKSVKDLKDAMEILIEEKRHRISTAEKLEDSIDFATELIFAEKRGELTRENVNQCILEMLIAAPDTMSVSVFFMLFLIAKHPQVEEAIIREIQTVVGERDIRIDDMQKLKVVENFINESMRYQPVVDLVMRKALEDDVIDGYPVKKGTNIILNLGRMHRLEFFPKPNEFTLENFAKNVPYRYFQPFGFGPRACAGKYITMVMMKVVLVTLLRRFHVQTLQGRCVEKMQKKNDLSLHPDETRDRLEMIFTPRNSDKCLER.

2 helical membrane passes run 19–39 and 53–73; these read EVVP…LLVW and FLGI…IGSA. The substrate site is built by Asp-309 and Met-374. A heme-binding site is contributed by Cys-437.

The protein belongs to the cytochrome P450 family. It depends on heme as a cofactor.

The protein localises to the endoplasmic reticulum membrane. Its subcellular location is the microsome membrane. It catalyses the reaction testosterone + 3 reduced [NADPH--hemoprotein reductase] + 3 O2 = 17beta-estradiol + formate + 3 oxidized [NADPH--hemoprotein reductase] + 4 H2O + 4 H(+). The enzyme catalyses androst-4-ene-3,17-dione + 3 reduced [NADPH--hemoprotein reductase] + 3 O2 = estrone + formate + 3 oxidized [NADPH--hemoprotein reductase] + 4 H2O + 4 H(+). The catalysed reaction is androst-4-ene-3,17-dione + reduced [NADPH--hemoprotein reductase] + O2 = 19-hydroxyandrost-4-ene-3,17-dione + oxidized [NADPH--hemoprotein reductase] + H2O + H(+). It carries out the reaction 19-hydroxyandrost-4-ene-3,17-dione + reduced [NADPH--hemoprotein reductase] + O2 = 19-oxo-androst-4-ene-3,17-dione + oxidized [NADPH--hemoprotein reductase] + 2 H2O + H(+). It catalyses the reaction 19-oxo-androst-4-ene-3,17-dione + reduced [NADPH--hemoprotein reductase] + O2 = estrone + formate + oxidized [NADPH--hemoprotein reductase] + H2O + 2 H(+). The enzyme catalyses estrone + reduced [NADPH--hemoprotein reductase] + O2 = 2-hydroxyestrone + oxidized [NADPH--hemoprotein reductase] + H2O + H(+). The catalysed reaction is 17beta-hydroxy-5alpha-androstan-3-one + reduced [NADPH--hemoprotein reductase] + O2 = 17beta,19-dihydroxy-3-oxo-5alpha-androstanone + oxidized [NADPH--hemoprotein reductase] + H2O + H(+). It carries out the reaction 17beta,19-dihydroxy-3-oxo-5alpha-androstanone + reduced [NADPH--hemoprotein reductase] + O2 = 17beta-hydroxy-3,19-dioxo-5alpha-androstanone + oxidized [NADPH--hemoprotein reductase] + 2 H2O + H(+). It catalyses the reaction 17beta-hydroxy-3,19-dioxo-5alpha-androstanone + reduced [NADPH--hemoprotein reductase] + O2 = 17beta-hydroxy-3-oxo-19-nor-5alpha-androst-1-ene + formate + oxidized [NADPH--hemoprotein reductase] + H2O + 2 H(+). It functions in the pathway steroid hormone biosynthesis. In terms of biological role, a cytochrome P450 monooxygenase that catalyzes the conversion of C19 androgens, androst-4-ene-3,17-dione (androstenedione) and testosterone to the C18 estrogens, estrone and estradiol, respectively. Catalyzes three successive oxidations of C19 androgens: two conventional oxidations at C19 yielding 19-hydroxy and 19-oxo/19-aldehyde derivatives, followed by a third oxidative aromatization step that involves C1-beta hydrogen abstraction combined with cleavage of the C10-C19 bond to yield a phenolic A ring and formic acid. Alternatively, the third oxidative reaction yields a 19-norsteroid and formic acid. Converts dihydrotestosterone to delta1,10-dehydro 19-nordihydrotestosterone and may play a role in homeostasis of this potent androgen. Also displays 2-hydroxylase activity toward estrone. Mechanistically, uses molecular oxygen inserting one oxygen atom into a substrate, and reducing the second into a water molecule, with two electrons provided by NADPH via cytochrome P450 reductase (CPR; NADPH-ferrihemoprotein reductase). In Bos taurus (Bovine), this protein is Aromatase (CYP19A1).